The sequence spans 582 residues: MHILQVITGATLVSVPFVSAIPSSTSEFLPSTAEQNSAVLHSQGRSPPRLWTRLRDSIIETIWRVPSRQHNPSRIPSSLSIPRAPSSIRARYGDDVVLRFTIRSQNDVQALIEASNILFLDIWASTNEWVDIRLAKDVVSSLLGLLPSSLRTAHVPIIHDLAQAVYESYPQPVSSVPNPHHAFSPSVQQSSETQNIFFQDYQPLSVIIPWMRLLASMFSTHVRLVNLGTSYEGREIVGFRIGVRPANADLPTERRKTIVITGGSHAREWIGVSTVNYVAYSLITGYGKSRAITKLVEEFDWVLIPTMNPDGYVYTWETDRLWRKNRQENNLQFCPGVDLDRTWGYEWDGSDSRSNPCSEDFAGDGPFGGRESKVIAQWALNETNHHNVTFVGFLDLHSYSQQILYPYSYSCTNIPPTLENLEELAIGIAKAIRLTDHEHYDVSSACEGSVSSHKKRRGAALRSMQSAGGSALDWFYHDLHVRYAYQLKLRDKGGYGFLLPKKNIVPTGKEVYNAVLVFGQFLLGRGAQDIDWEGDFQFPAHSRPNVPEKEYRGPDEEYEISNQLEDDDNENDTLLGFRTQKV.

Residues 1–20 form the signal peptide; the sequence is MHILQVITGATLVSVPFVSA. A propeptide spanning residues 21 to 172 is cleaved from the precursor; that stretch reads IPSSTSEFLP…QAVYESYPQP (152 aa). A Peptidase M14 domain is found at 200 to 522; sequence DYQPLSVIIP…NAVLVFGQFL (323 aa). The Zn(2+) site is built by His265 and Glu268. Substrate is bound by residues 265–268, Arg323, and 340–341; these read HARE and DR. A disulfide bond links Cys334 and Cys357. 2 N-linked (GlcNAc...) asparagine glycosylation sites follow: Asn381 and Asn387. His397 lines the Zn(2+) pocket. 398-399 contacts substrate; the sequence is SY. The segment covering 561-571 has biased composition (acidic residues); that stretch reads SNQLEDDDNEN. Residues 561 to 582 form a disordered region; sequence SNQLEDDDNENDTLLGFRTQKV. A glycan (N-linked (GlcNAc...) asparagine) is linked at Asn571.

Belongs to the peptidase M14 family. Zn(2+) serves as cofactor.

It is found in the vacuole. Its subcellular location is the secreted. Its function is as follows. Inactive carboxypeptidase that may play a role in cell wall organization and biogenesis. This Coccidioides posadasii (strain C735) (Valley fever fungus) protein is Inactive metallocarboxypeptidase ECM14 (ECM14).